The following is a 309-amino-acid chain: Taste receptor type 2 member 113 (309 aa).

The Extracellular segment spans residues 1–8 (MVAVLQST). Residues 9–29 (FAIIFSMEFIVGTLGNGFIIL) traverse the membrane as a helical segment. The Cytoplasmic portion of the chain corresponds to 30–55 (MTCIDWVRRRKISLVDQILTALAITR). Residues 56 to 76 (ITLILLVFIDWWVSVLFPALH) traverse the membrane as a helical segment. The Extracellular portion of the chain corresponds to 77–101 (ETGKILRMYFISWTVINHCNLWLTA). The helical transmembrane segment at 102–122 (SLSIIYFLKIASFSSIIFLYL) threads the bilayer. The Cytoplasmic segment spans residues 123–127 (KFRVK). Residues 128–148 (NVVFVTLLVSLFFLFINTAIV) form a helical membrane-spanning segment. At 149–185 (NVYFDVCFDGVQRNVSQVSRLYNHEQICKFLSFTNPM) the chain is on the extracellular side. An N-linked (GlcNAc...) asparagine glycan is attached at N162. Residues 186–206 (FAFIPFVTSMATFFLLIFSLW) traverse the membrane as a helical segment. Over 207 to 229 (RHLKNMKHNAEGCRDVSTIVHIR) the chain is Cytoplasmic. The helical transmembrane segment at 230–250 (ALQTIIVSVVLYSTFFLSFFV) threads the bilayer. The Extracellular portion of the chain corresponds to 251–262 (KVWSSGSPERYL). The chain crosses the membrane as a helical span at residues 263 to 283 (IFLFVWALGNAVLPAHTFVLI). Residues 284–309 (WGNCRLRWASLSLMLWLRYRFKNIDV) are Cytoplasmic-facing.

This sequence belongs to the G-protein coupled receptor T2R family.

The protein resides in the membrane. Functionally, putative taste receptor which may play a role in the perception of bitterness. This Rattus norvegicus (Rat) protein is Taste receptor type 2 member 113.